The primary structure comprises 110 residues: Phosphoribosyl-AMP cyclohydrolase (110 aa).

Residue D80 coordinates Mg(2+). Residue C81 participates in Zn(2+) binding. Mg(2+) contacts are provided by D82 and D84. Zn(2+)-binding residues include C97 and C104.

The protein belongs to the PRA-CH family. In terms of assembly, homodimer. It depends on Mg(2+) as a cofactor. Zn(2+) is required as a cofactor.

The protein localises to the cytoplasm. The enzyme catalyses 1-(5-phospho-beta-D-ribosyl)-5'-AMP + H2O = 1-(5-phospho-beta-D-ribosyl)-5-[(5-phospho-beta-D-ribosylamino)methylideneamino]imidazole-4-carboxamide. It functions in the pathway amino-acid biosynthesis; L-histidine biosynthesis; L-histidine from 5-phospho-alpha-D-ribose 1-diphosphate: step 3/9. Functionally, catalyzes the hydrolysis of the adenine ring of phosphoribosyl-AMP. The chain is Phosphoribosyl-AMP cyclohydrolase from Clostridium botulinum (strain Kyoto / Type A2).